The chain runs to 389 residues: Succinate--CoA ligase [ADP-forming] subunit beta (389 aa).

The ATP-grasp domain maps to lysine 9–lysine 236. ATP-binding positions include lysine 45, glycine 52–glycine 54, serine 94, and glutamate 99. 2 residues coordinate Mg(2+): asparagine 191 and aspartate 205. Substrate is bound by residues asparagine 256 and glycine 318–threonine 320.

It belongs to the succinate/malate CoA ligase beta subunit family. In terms of assembly, heterotetramer of two alpha and two beta subunits. Requires Mg(2+) as cofactor.

The catalysed reaction is succinate + ATP + CoA = succinyl-CoA + ADP + phosphate. The enzyme catalyses GTP + succinate + CoA = succinyl-CoA + GDP + phosphate. It participates in carbohydrate metabolism; tricarboxylic acid cycle; succinate from succinyl-CoA (ligase route): step 1/1. Its function is as follows. Succinyl-CoA synthetase functions in the citric acid cycle (TCA), coupling the hydrolysis of succinyl-CoA to the synthesis of either ATP or GTP and thus represents the only step of substrate-level phosphorylation in the TCA. The beta subunit provides nucleotide specificity of the enzyme and binds the substrate succinate, while the binding sites for coenzyme A and phosphate are found in the alpha subunit. The protein is Succinate--CoA ligase [ADP-forming] subunit beta of Rhodococcus jostii (strain RHA1).